We begin with the raw amino-acid sequence, 476 residues long: MHTVEKIGGTSMSRFEEVLDNIFIGRREGAALYQRIFVVSAYSGMTNLLLEHKKTGEPGVYQRFADAQSEGAWREALEGVRQRMLAKNAELFSSEYELHAANQFINSRIDDASECMHSLQKLCAYGHFQLSEHLMKVREMLASLGEAHSAFNSVLALKQRGVNARLADLTGWQQEAPLPFEEMISSHFAGFDFSRELVVATGYTHCAEGLMNTFDRGYSEITFAQIAAATGAREAIIHKEFHLSSADPNLVGADKVVTIGRTNYDVADQLSNLGMEAIHPRAAKTLRRAGVELRIKNAFEPEHGGTLISQDYKSEKPCVEIIAGRKDVFGIEVFDQDMLGDIGYDMEISKLLKQLKLYVVNKDSDANSITYYASGSRKLINRAARLIEEQYPAAEVTVHNLAIVSAIGSDLKVKGILAKTVAALAEAGISIQAIHQSIRQVEMQCVVNEEDYDAAIAALHRALIEPENHGDVIAAA.

Residues 405 to 476 (SAIGSDLKVK…ENHGDVIAAA (72 aa)) enclose the ACT domain.

It belongs to the aspartokinase family. In terms of assembly, monomer.

It is found in the cytoplasm. The catalysed reaction is L-aspartate + ATP = 4-phospho-L-aspartate + ADP. It participates in amine and polyamine biosynthesis; ectoine biosynthesis. Allosterically and strongly feedback inhibited by tryptophan. The presence of either 650 mM NaCl or KCl reduces the inhibition by tryptophan. In terms of biological role, involved in the biosynthesis of L-aspartate-beta-semialdehyde, which is an intermediate in the biosynthesis of ectoine, a highly soluble organic osmolyte, called compatible solute. Ectoine is used to avoid excessive water efflux, plasmolysis, molecular crowding of the cytoplasm, and cessation of growth in high salinity environments. Catalyzes the phosphorylation of the beta-carboxyl group of L-aspartate to yield 4-phospho-L-aspartate. This chain is Aspartate kinase Ask_Ect (ask), found in Stutzerimonas stutzeri (strain A1501) (Pseudomonas stutzeri).